Consider the following 90-residue polypeptide: Phosphocarrier protein HPr (90 aa).

Residues 1 to 89 (MPALEITIIN…ELINNRFDEG (89 aa)) form the HPr domain. The Pros-phosphohistidine intermediate role is filled by His-15.

This sequence belongs to the HPr family.

Its subcellular location is the cytoplasm. Its function is as follows. General (non sugar-specific) component of the phosphoenolpyruvate-dependent sugar phosphotransferase system (sugar PTS). This major carbohydrate active-transport system catalyzes the phosphorylation of incoming sugar substrates concomitantly with their translocation across the cell membrane. The phosphoryl group from phosphoenolpyruvate (PEP) is transferred to the phosphoryl carrier protein HPr by enzyme I. Phospho-HPr then transfers it to the PTS EIIA domain. The sequence is that of Phosphocarrier protein HPr (ptsH) from Pseudomonas aeruginosa (strain ATCC 15692 / DSM 22644 / CIP 104116 / JCM 14847 / LMG 12228 / 1C / PRS 101 / PAO1).